The primary structure comprises 146 residues: Ribonuclease H (146 aa).

Residues 1–141 enclose the RNase H type-1 domain; sequence MEKIDIFTDG…ADALANRGVE (141 aa). Residues Asp-9, Glu-47, Asp-69, and Asp-133 each coordinate Mg(2+).

The protein belongs to the RNase H family. In terms of assembly, monomer. Mg(2+) is required as a cofactor.

It localises to the cytoplasm. It carries out the reaction Endonucleolytic cleavage to 5'-phosphomonoester.. Endonuclease that specifically degrades the RNA of RNA-DNA hybrids. The chain is Ribonuclease H from Herminiimonas arsenicoxydans.